We begin with the raw amino-acid sequence, 349 residues long: DNA-directed RNA polymerase subunit Rpo1N (349 aa).

The interval 306 to 349 is disordered; sequence EDEGEEFAGEQATNLSESADDRMDRDRPSSHGAAPIDVPEVGDD. The segment covering 324-334 has biased composition (basic and acidic residues); it reads ADDRMDRDRPS.

The protein belongs to the RNA polymerase beta' chain family. In terms of assembly, part of the RNA polymerase complex.

It localises to the cytoplasm. The enzyme catalyses RNA(n) + a ribonucleoside 5'-triphosphate = RNA(n+1) + diphosphate. In terms of biological role, DNA-dependent RNA polymerase (RNAP) catalyzes the transcription of DNA into RNA using the four ribonucleoside triphosphates as substrates. Forms the clamp head domain. The polypeptide is DNA-directed RNA polymerase subunit Rpo1N (Halococcus morrhuae (Micrococcus morrhuae)).